The chain runs to 524 residues: Acetyl-CoA hydrolase (524 aa).

275 to 279 (GIGNI) provides a ligand contact to CoA. Glu-300 (5-glutamyl coenzyme A thioester intermediate) is an active-site residue. The CoA site is built by Asn-390 and Gly-394.

The protein belongs to the acetyl-CoA hydrolase/transferase family.

It localises to the cytoplasm. It carries out the reaction acetyl-CoA + H2O = acetate + CoA + H(+). In terms of biological role, presumably involved in regulating the intracellular acetyl-CoA pool for fatty acid and cholesterol synthesis and fatty acid oxidation. The chain is Acetyl-CoA hydrolase (ACH1) from Candida albicans (strain SC5314 / ATCC MYA-2876) (Yeast).